A 491-amino-acid chain; its full sequence is Glutamyl-tRNA(Gln) amidotransferase subunit A (491 aa).

Residues lysine 79 and serine 154 each act as charge relay system in the active site. The active-site Acyl-ester intermediate is serine 178.

The protein belongs to the amidase family. GatA subfamily. Heterotrimer of A, B and C subunits.

The catalysed reaction is L-glutamyl-tRNA(Gln) + L-glutamine + ATP + H2O = L-glutaminyl-tRNA(Gln) + L-glutamate + ADP + phosphate + H(+). In terms of biological role, allows the formation of correctly charged Gln-tRNA(Gln) through the transamidation of misacylated Glu-tRNA(Gln) in organisms which lack glutaminyl-tRNA synthetase. The reaction takes place in the presence of glutamine and ATP through an activated gamma-phospho-Glu-tRNA(Gln). The protein is Glutamyl-tRNA(Gln) amidotransferase subunit A of Natranaerobius thermophilus (strain ATCC BAA-1301 / DSM 18059 / JW/NM-WN-LF).